Consider the following 367-residue polypeptide: MSFNFTWPEFSAEFYEYAVQTLTTALNRGQKPKSIVGDIHVKGLHMGRVPPELEILEIGDLSRERFRGIFRFVYAGDAHLEFSTGVQANPLARGSEDHGIFSGPMTSRGMLFAASPLTVPMRVCLSDFKLRAIVVLVVSRTKGITLVFKNDPLESVKVSSTFDSVGVIQRYLQEEIEGQLREMFRADLPSIIHRLSQDWLRTESKEKVVPTPSAQPAKPAMPPVPSDVWPSHHTADVPLSVLALEEAAPSAYASHLTKLDTASQSSQGLKDLVQPAGSHPAGARTFHTTSRVRVPSSLESNAPPTPIALSSPGGLDVAGHLAELLRANHTLSPYTPHPRLVALRTMPAHRPRSSRVHARQKRAFHLS.

In terms of domain architecture, SMP-LTD spans Met-1–Gln-197. Disordered regions lie at residues Gln-267–Ser-311 and Pro-347–Ser-367. The segment covering Phe-286–Ala-302 has biased composition (polar residues).

The protein belongs to the MDM34 family. In terms of assembly, component of the ER-mitochondria encounter structure (ERMES) or MDM complex, composed of MMM1, MDM10, MDM12 and MDM34.

Its subcellular location is the mitochondrion outer membrane. In terms of biological role, component of the ERMES/MDM complex, which serves as a molecular tether to connect the endoplasmic reticulum (ER) and mitochondria. Components of this complex are involved in the control of mitochondrial shape and protein biogenesis, and function in nonvesicular lipid trafficking between the ER and mitochondria. MDM34 is required for the interaction of the ER-resident membrane protein MMM1 and the outer mitochondrial membrane-resident beta-barrel protein MDM10. The sequence is that of Mitochondrial distribution and morphology protein 34 from Malassezia globosa (strain ATCC MYA-4612 / CBS 7966) (Dandruff-associated fungus).